We begin with the raw amino-acid sequence, 286 residues long: 4-hydroxy-tetrahydrodipicolinate synthase 2 (286 aa).

Residue Thr45 participates in pyruvate binding. The active-site Proton donor/acceptor is Tyr133. Lys161 functions as the Schiff-base intermediate with substrate in the catalytic mechanism. Ile203 is a binding site for pyruvate.

It belongs to the DapA family. As to quaternary structure, homotetramer; dimer of dimers.

The protein localises to the cytoplasm. It catalyses the reaction L-aspartate 4-semialdehyde + pyruvate = (2S,4S)-4-hydroxy-2,3,4,5-tetrahydrodipicolinate + H2O + H(+). The protein operates within amino-acid biosynthesis; L-lysine biosynthesis via DAP pathway; (S)-tetrahydrodipicolinate from L-aspartate: step 3/4. In terms of biological role, catalyzes the condensation of (S)-aspartate-beta-semialdehyde [(S)-ASA] and pyruvate to 4-hydroxy-tetrahydrodipicolinate (HTPA). The chain is 4-hydroxy-tetrahydrodipicolinate synthase 2 from Clostridium acetobutylicum (strain ATCC 824 / DSM 792 / JCM 1419 / IAM 19013 / LMG 5710 / NBRC 13948 / NRRL B-527 / VKM B-1787 / 2291 / W).